A 142-amino-acid polypeptide reads, in one-letter code: Transcriptional regulator MraZ (142 aa).

SpoVT-AbrB domains are found at residues 5–47 (THSP…SERE) and 76–119 (ASDE…DAQA).

Belongs to the MraZ family. As to quaternary structure, forms oligomers.

It localises to the cytoplasm. The protein resides in the nucleoid. This is Transcriptional regulator MraZ from Arthrobacter sp. (strain FB24).